The chain runs to 819 residues: Myosin light chain kinase 3 (819 aa).

A disordered region spans residues 146-460 (VPWRRGSPGD…PGVGNPEPEQ (315 aa)). S152 is subject to Phosphoserine. Basic and acidic residues-rich tracts occupy residues 158–170 (EENK…EGAK) and 183–196 (DARE…KADV). Positions 307–318 (GPGPQCPGPPGL) are enriched in pro residues. S355, S401, and S408 each carry phosphoserine. The region spanning 515 to 770 (VCQHEVLGGG…ATQCLKHEWL (256 aa)) is the Protein kinase domain. Residues 521–529 (LGGGRFGQV) and K544 contribute to the ATP site. The active-site Proton acceptor is D636.

Belongs to the protein kinase superfamily. CAMK Ser/Thr protein kinase family. Mg(2+) serves as cofactor. Post-translationally, phosphorylated on serine residues.

The protein localises to the cytoplasm. It catalyses the reaction L-seryl-[myosin light chain] + ATP = O-phospho-L-seryl-[myosin light chain] + ADP + H(+). The enzyme catalyses L-threonyl-[myosin light chain] + ATP = O-phospho-L-threonyl-[myosin light chain] + ADP + H(+). Functionally, kinase that phosphorylates MYL2 in vitro. Promotes sarcomere formation in cardiomyocytes and increases cardiomyocyte contractility. The protein is Myosin light chain kinase 3 (MYLK3) of Pongo abelii (Sumatran orangutan).